The sequence spans 397 residues: Lysophospholipid transporter LplT (397 aa).

Over 1-17 (MSESVHTNTSLWSKGMK) the chain is Periplasmic. A helical transmembrane segment spans residues 18–38 (AVIVAQFLSAFGDNALLFATL). Residues 39–52 (ALLKAQFYPEWSQP) lie on the Cytoplasmic side of the membrane. Residues 53-73 (ILQMVFVGAYILFAPFVGQVA) traverse the membrane as a helical segment. The Periplasmic segment spans residues 74–90 (DSFAKGRVMMFANGLKL). Residues 91 to 111 (LGAASICFGINPFLGYTLVGV) form a helical membrane-spanning segment. The Cytoplasmic segment spans residues 112-144 (GAAAYSPAKYGILGELTTGSKLVKANGLMEAST). Residues 145–165 (IAAILLGSVAGGVLADWHVLV) form a helical membrane-spanning segment. Alanine 166 is a topological domain (periplasmic). Residues 167 to 187 (LAACALAYGGAVVANIYIPKL) form a helical membrane-spanning segment. The Cytoplasmic portion of the chain corresponds to 188 to 226 (AAARPGQSWNLINMTRSFLNACTSLWRNGETRFSLVGTS). The helical transmembrane segment at 227–247 (LFWGAGVTLRFLLVLWVPVAL) threads the bilayer. Residues 248–256 (GITDNSTPT) lie on the Periplasmic side of the membrane. Residues 257 to 277 (YLNAMVAIGIVVGAGAAAKLV) form a helical membrane-spanning segment. The Cytoplasmic segment spans residues 278 to 280 (TLE). A helical transmembrane segment spans residues 281 to 301 (TVSRCMPAGILIGVVVLIFSL). At 302–304 (QHE) the chain is on the periplasmic side. A helical membrane pass occupies residues 305–325 (LLPAYALLMLIGVMGGFFVVP). The Cytoplasmic segment spans residues 326–343 (LNALLQERGKKSVGAGNA). Residues 344-364 (IAVQNLGENSAMLLMLGIYSL) traverse the membrane as a helical segment. At 365–366 (AV) the chain is on the periplasmic side. A helical transmembrane segment spans residues 367–387 (MVGIPVVPIGIGFGALFALAI). Topologically, residues 388-397 (TALWIWQRRH) are cytoplasmic.

The protein belongs to the major facilitator superfamily. LplT (TC 2.A.1.42) family.

The protein resides in the cell inner membrane. Catalyzes the facilitated diffusion of 2-acyl-glycero-3-phosphoethanolamine (2-acyl-GPE) into the cell. The chain is Lysophospholipid transporter LplT from Shigella boydii serotype 4 (strain Sb227).